The chain runs to 250 residues: Small ribosomal subunit protein uS3 (250 aa).

The region spanning Ile-16–Ser-85 is the KH type-2 domain.

The protein belongs to the universal ribosomal protein uS3 family. Part of the 30S ribosomal subunit.

Its function is as follows. Binds the lower part of the 30S subunit head. This Methanobrevibacter smithii (strain ATCC 35061 / DSM 861 / OCM 144 / PS) protein is Small ribosomal subunit protein uS3.